The following is a 114-amino-acid chain: Non-specific lipid-transfer protein 2 (114 aa).

The signal sequence occupies residues 1 to 23 (MEMVNKIACFVLLCMVVVAPHAE). 4 disulfides stabilise this stretch: cysteine 27-cysteine 73, cysteine 37-cysteine 50, cysteine 51-cysteine 96, and cysteine 71-cysteine 110.

This sequence belongs to the plant LTP family.

Functionally, plant non-specific lipid-transfer proteins transfer phospholipids as well as galactolipids across membranes. May play a role in wax or cutin deposition in the cell walls of expanding epidermal cells and certain secretory tissues. In Solanum chilense (Tomato), this protein is Non-specific lipid-transfer protein 2.